A 394-amino-acid chain; its full sequence is Acetyl-CoA acetyltransferase (394 aa).

C89 acts as the Acyl-thioester intermediate in catalysis. Residues H350 and C380 each act as proton acceptor in the active site.

It belongs to the thiolase-like superfamily. Thiolase family. As to quaternary structure, homotetramer.

It localises to the cytoplasm. The enzyme catalyses 2 acetyl-CoA = acetoacetyl-CoA + CoA. It functions in the pathway biopolymer metabolism; poly-(R)-3-hydroxybutanoate biosynthesis. Its pathway is metabolic intermediate biosynthesis; (R)-mevalonate biosynthesis; (R)-mevalonate from acetyl-CoA: step 1/3. The chain is Acetyl-CoA acetyltransferase from Thiocystis violacea.